The primary structure comprises 228 residues: UPF0173 metal-dependent hydrolase Smar_0891 (228 aa).

It belongs to the UPF0173 family.

The protein is UPF0173 metal-dependent hydrolase Smar_0891 of Staphylothermus marinus (strain ATCC 43588 / DSM 3639 / JCM 9404 / F1).